A 461-amino-acid chain; its full sequence is Cysteine--tRNA ligase (461 aa).

Cys-28 serves as a coordination point for Zn(2+). The 'HIGH' region signature appears at 30–40 (ITVYDLCHIGH). Zn(2+) is bound by residues Cys-209, His-234, and Glu-238. The 'KMSKS' region signature appears at 266-270 (KMSKS). Lys-269 lines the ATP pocket.

The protein belongs to the class-I aminoacyl-tRNA synthetase family. Monomer. Zn(2+) is required as a cofactor.

It localises to the cytoplasm. It catalyses the reaction tRNA(Cys) + L-cysteine + ATP = L-cysteinyl-tRNA(Cys) + AMP + diphosphate. In Salmonella arizonae (strain ATCC BAA-731 / CDC346-86 / RSK2980), this protein is Cysteine--tRNA ligase.